A 356-amino-acid polypeptide reads, in one-letter code: MNSLEAGRVLSVLDEALEGIRLISYVTQDVLDTAEQLRDMLGEDLANALIKHRQLIQSAKSTLNNDQVQASTLELVRLLKKSPSAQRLQVLPYERTYGILQTLQYFEQLRQFAQKRLTTTVEEDSSNREFFEEVRDREERAVAEQEQLKQKLKLQRVELQKAAGTIQVSEDRARGEVSEVQSSTQQSRAAIEGSARAQSEADKSSFQSDLDQVTKELAAARAELARLRQEHKDNEALLRKARKRAEQDVEVQIGEYDADVGAKEEELGKARAEYEEVLRQLQEYNSGWSEMYQERLEYEERERRLADQRFQAALLAVRQNHAARVIQSYWRGFKKAREAAKKKAKKLEKAKAAKKK.

Residues 126–167 adopt a coiled-coil conformation; it reads SNREFFEEVRDREERAVAEQEQLKQKLKLQRVELQKAAGTIQ. Positions 173-209 are disordered; sequence ARGEVSEVQSSTQQSRAAIEGSARAQSEADKSSFQSD. The segment covering 178 to 187 has biased composition (low complexity); that stretch reads SEVQSSTQQS. Positions 197-287 form a coiled coil; sequence AQSEADKSSF…LRQLQEYNSG (91 aa). The 30-residue stretch at 319-348 folds into the IQ domain; it reads QNHAARVIQSYWRGFKKAREAAKKKAKKLE.

This sequence belongs to the DRC10 family. As to quaternary structure, component of the nexin-dynein regulatory complex (N-DRC).

It localises to the cytoplasm. It is found in the cytoskeleton. The protein resides in the flagellum axoneme. In terms of biological role, component of the nexin-dynein regulatory complex (N-DRC), a key regulator of ciliary/flagellar motility which maintains the alignment and integrity of the distal axoneme and regulates microtubule sliding in motile axonemes. This Chlamydomonas reinhardtii (Chlamydomonas smithii) protein is Dynein regulatory complex protein 10.